The following is a 584-amino-acid chain: Insulin-like growth factor 2 mRNA-binding protein 3 (584 aa).

2 RRM domains span residues 2-75 and 81-156; these read NKLY…HSVP and RKLQ…YIPD. The segment at 160–199 is disordered; sequence AQQPPQQHPQGRRGFGQRGPPRQGSPSATTRQKPQSDVPL. Residues 184 to 194 show a composition bias toward polar residues; it reads SPSATTRQKPQ. 4 consecutive KH domains span residues 196 to 261, 277 to 344, 409 to 474, and 491 to 557; these read DVPL…CKII, EIPL…EEEI, SETV…QGRI, and KLEA…QRKI.

It belongs to the RRM IMP/VICKZ family. In terms of assembly, homodimer and multimer.

It is found in the cytoplasm. It localises to the nucleus. Its subcellular location is the P-body. The protein localises to the stress granule. RNA-binding factor that may recruit target transcripts to cytoplasmic protein-RNA complexes (mRNPs). This transcript 'caging' into mRNPs allows mRNA transport and transient storage. It also modulates the rate and location at which target transcripts encounter the translational apparatus and shields them from endonuclease attacks or microRNA-mediated degradation. Preferentially binds to N6-methyladenosine (m6A)-containing mRNAs and increases their stability. The polypeptide is Insulin-like growth factor 2 mRNA-binding protein 3 (IGF2BP3) (Gallus gallus (Chicken)).